The following is a 505-amino-acid chain: RNA-splicing ligase RtcB homolog (505 aa).

5 residues coordinate Mn(2+): aspartate 119, cysteine 122, histidine 227, histidine 259, and histidine 353. 226-230 provides a ligand contact to GMP; the sequence is NHYGE. GMP contacts are provided by residues 353 to 354, 402 to 405, serine 409, 428 to 431, and lysine 504; these read HN, GGTM, and HGAG. Histidine 428 acts as the GMP-histidine intermediate in catalysis.

This sequence belongs to the RtcB family. Catalytic component of the tRNA-splicing ligase complex. Requires Mn(2+) as cofactor.

It carries out the reaction a 3'-end 3'-phospho-ribonucleotide-RNA + a 5'-end dephospho-ribonucleoside-RNA + GTP = a ribonucleotidyl-ribonucleotide-RNA + GMP + diphosphate. It catalyses the reaction a 3'-end 2',3'-cyclophospho-ribonucleotide-RNA + a 5'-end dephospho-ribonucleoside-RNA + GTP + H2O = a ribonucleotidyl-ribonucleotide-RNA + GMP + diphosphate + H(+). In terms of biological role, catalytic subunit of the tRNA-splicing ligase complex that acts by directly joining spliced tRNA halves to mature-sized tRNAs by incorporating the precursor-derived splice junction phosphate into the mature tRNA as a canonical 3',5'-phosphodiester. May act as an RNA ligase with broad substrate specificity, and may function toward other RNAs. This chain is RNA-splicing ligase RtcB homolog, found in Brugia malayi (Filarial nematode worm).